We begin with the raw amino-acid sequence, 422 residues long: Serine hydroxymethyltransferase (422 aa).

Residue 120–122 (GHI) participates in (6S)-5,6,7,8-tetrahydrofolate binding. Lysine 226 bears the N6-(pyridoxal phosphate)lysine mark. Residue glutamate 241 coordinates (6S)-5,6,7,8-tetrahydrofolate.

The protein belongs to the SHMT family. In terms of assembly, homodimer. Pyridoxal 5'-phosphate is required as a cofactor.

It localises to the cytoplasm. The enzyme catalyses 5,10-methylenetetrahydromethanopterin + glycine + H2O = 5,6,7,8-tetrahydromethanopterin + L-serine. It participates in amino-acid biosynthesis; glycine biosynthesis; glycine from L-serine: step 1/1. Its function is as follows. Catalyzes the reversible interconversion of serine and glycine with tetrahydromethanopterin (H4MPT) serving as the one-carbon carrier. Also exhibits a pteridine-independent aldolase activity toward beta-hydroxyamino acids, producing glycine and aldehydes, via a retro-aldol mechanism. This Methanosphaera stadtmanae (strain ATCC 43021 / DSM 3091 / JCM 11832 / MCB-3) protein is Serine hydroxymethyltransferase.